A 103-amino-acid chain; its full sequence is Protein Rev (103 aa).

Position 5 is a phosphoserine; by host CK2 (Ser-5). The tract at residues 18–26 (VIKILYQSN) is homomultimerization. A compositionally biased stretch (polar residues) spans 25 to 34 (SNPYPNDSGT). 2 disordered regions span residues 25-48 (SNPYPNDSGTRQARKNRRRRWRAR) and 66-103 (GLQEPSTLPLPPLDRLSLNPEEDLGTSETEHPQGTATT). The Nuclear localization signal and RNA-binding (RRE) signature appears at 34 to 50 (TRQARKNRRRRWRARQR). The segment covering 36-48 (QARKNRRRRWRAR) has biased composition (basic residues). The Nuclear export signal and binding to XPO1 signature appears at 73-84 (LPLPPLDRLSLN). Ser-92 carries the phosphoserine; by host modification.

It belongs to the HIV-1 REV protein family. As to quaternary structure, homomultimer; when bound to the RRE. Multimeric assembly is essential for activity and may involve XPO1. Binds to human KPNB1, XPO1, TNPO1, RANBP5 and IPO7. Interacts with the viral Integrase. Interacts with human KHDRBS1. Interacts with human NAP1; this interaction decreases Rev multimerization and stimulates its activity. Interacts with human DEAD-box helicases DDX3 and DDX24; these interactions may serve for viral RNA export to the cytoplasm and packaging, respectively. Interacts with human PSIP1; this interaction may inhibit HIV-1 DNA integration by promoting dissociation of the Integrase-LEDGF/p75 complex. Asymmetrically arginine dimethylated at one site by host PRMT6. Methylation impairs the RNA-binding activity and export of viral RNA from the nucleus to the cytoplasm. In terms of processing, phosphorylated by protein kinase CK2. Presence of, and maybe binding to the N-terminus of the regulatory beta subunit of CK2 is necessary for CK2-mediated Rev's phosphorylation.

It localises to the host nucleus. The protein resides in the host nucleolus. It is found in the host cytoplasm. Functionally, escorts unspliced or incompletely spliced viral pre-mRNAs (late transcripts) out of the nucleus of infected cells. These pre-mRNAs carry a recognition sequence called Rev responsive element (RRE) located in the env gene, that is not present in fully spliced viral mRNAs (early transcripts). This function is essential since most viral proteins are translated from unspliced or partially spliced pre-mRNAs which cannot exit the nucleus by the pathway used by fully processed cellular mRNAs. Rev itself is translated from a fully spliced mRNA that readily exits the nucleus. Rev's nuclear localization signal (NLS) binds directly to KPNB1/Importin beta-1 without previous binding to KPNA1/Importin alpha-1. KPNB1 binds to the GDP bound form of RAN (Ran-GDP) and targets Rev to the nucleus. In the nucleus, the conversion from Ran-GDP to Ran-GTP dissociates Rev from KPNB1 and allows Rev's binding to the RRE in viral pre-mRNAs. Rev multimerization on the RRE via cooperative assembly exposes its nuclear export signal (NES) to the surface. Rev can then form a complex with XPO1/CRM1 and Ran-GTP, leading to nuclear export of the complex. Conversion from Ran-GTP to Ran-GDP mediates dissociation of the Rev/RRE/XPO1/RAN complex, so that Rev can return to the nucleus for a subsequent round of export. Beside KPNB1, also seems to interact with TNPO1/Transportin-1, RANBP5/IPO5 and IPO7/RANBP7 for nuclear import. The nucleoporin-like HRB/RIP is an essential cofactor that probably indirectly interacts with Rev to release HIV RNAs from the perinuclear region to the cytoplasm. The sequence is that of Protein Rev from Pan troglodytes (Chimpanzee).